We begin with the raw amino-acid sequence, 83 residues long: uncharacterized protein (83 aa).

It belongs to the BolA/IbaG family.

This is an uncharacterized protein from Acinetobacter guillouiae (Acinetobacter genomosp. 11).